Consider the following 85-residue polypeptide: Small ribosomal subunit protein bS20 (85 aa).

It belongs to the bacterial ribosomal protein bS20 family.

Its function is as follows. Binds directly to 16S ribosomal RNA. The polypeptide is Small ribosomal subunit protein bS20 (Cytophaga hutchinsonii (strain ATCC 33406 / DSM 1761 / CIP 103989 / NBRC 15051 / NCIMB 9469 / D465)).